An 842-amino-acid chain; its full sequence is Squamosa promoter-binding-like protein 9 (842 aa).

Residues 1-18 (MDAPGGGGGGGGGGGGVD) are compositionally biased toward gly residues. 3 disordered regions span residues 1–22 (MDAPGGGGGGGGGGGGVDAGEP), 59–97 (ALLPPAPSPQPAEAEAEAAGPASLPSSMQAEGSKRRVRK), and 140–168 (RKKPKGAGRGSGAAVGGSGGGASRGTPAE). Residues 69 to 85 (PAEAEAEAAGPASLPSS) are compositionally biased toward low complexity. The segment covering 146–162 (AGRGSGAAVGGSGGGAS) has biased composition (gly residues). The segment at 168–245 (EMKCQVPGCE…ERHNKRRRRK (78 aa)) adopts an SBP-type; atypical zinc-finger fold. Residues Cys171, Cys176, Cys193, Cys196, Cys212, Cys215, His219, and Cys231 each contribute to the Zn(2+) site. Residues 228–244 (KRSCRRKLERHNKRRRR) carry the Bipartite nuclear localization signal motif. The segment covering 236-246 (ERHNKRRRRKP) has biased composition (basic residues). The disordered stretch occupies residues 236-256 (ERHNKRRRRKPDSKGILEKDI).

Ubiquitous.

The protein localises to the nucleus. Trans-acting factor that binds specifically to the consensus nucleotide sequence 5'-TNCGTACAA-3'. The chain is Squamosa promoter-binding-like protein 9 (SPL9) from Oryza sativa subsp. japonica (Rice).